Reading from the N-terminus, the 1420-residue chain is tRNA (32-2'-O)-methyltransferase regulator TRM732 (1420 aa).

Residues 748 to 754 (RRSGGLP) are required for activity.

This sequence belongs to the THADA family. Interacts with TRM7; for 2'-O-methylation of position 32 in substrate tRNAs.

It is found in the cytoplasm. Together with methyltransferase TRM7, methylates the 2'-O-ribose of nucleotides at position 32 of the anticodon loop of substrate tRNAs. This is tRNA (32-2'-O)-methyltransferase regulator TRM732 (TRM732) from Saccharomyces cerevisiae (strain ATCC 204508 / S288c) (Baker's yeast).